We begin with the raw amino-acid sequence, 164 residues long: Large ribosomal subunit protein eL24 (164 aa).

Disordered stretches follow at residues 63–82 (KDAA…KPYS) and 117–164 (ERIK…GGKA). The span at 71 to 81 (KKRRRATKKPY) shows a compositional bias: basic residues. A compositionally biased stretch (basic and acidic residues) spans 117–133 (ERIKKTKDEKKAKKAEV).

This sequence belongs to the eukaryotic ribosomal protein eL24 family.

Its subcellular location is the cytoplasm. This chain is Large ribosomal subunit protein eL24 (RPL24), found in Cicer arietinum (Chickpea).